We begin with the raw amino-acid sequence, 534 residues long: uncharacterized protein (534 aa).

Disordered regions lie at residues 1–150 (MSDS…DIPP), 252–284 (RRFR…NGQP), and 383–434 (WKSQ…PSLP). The segment covering 8–67 (SQREDNYSRDRRSRFTEDSYSRRDSQRSGNEAPRESRYYRKEEHLQERSRSRSPARDSRW) has biased composition (basic and acidic residues). Positions 102 to 113 (SLQSTKATSSRT) are enriched in polar residues. The span at 130-141 (PSAPAPPLPPSS) shows a compositional bias: pro residues. The span at 252-262 (RRFRRREDNER) shows a compositional bias: basic and acidic residues. A compositionally biased stretch (low complexity) spans 263–272 (NNSNSPRNFS). Polar residues predominate over residues 393–408 (NQGNRAYNPPNRNQAF).

This is an uncharacterized protein from Schizosaccharomyces pombe (strain 972 / ATCC 24843) (Fission yeast).